Consider the following 308-residue polypeptide: HTH-type transcriptional regulator YtlI (308 aa).

In terms of domain architecture, HTH lysR-type spans 1–57 (MELRSIKTFHTIVKFGSFYKAAEILNYSQPTISMRMKQLEQDLGVLLFERGKSLQLT). Positions 18-37 (FYKAAEILNYSQPTISMRMK) form a DNA-binding region, H-T-H motif.

It belongs to the LysR transcriptional regulatory family.

Its function is as follows. Positively regulates the expression of ytmI operon in response to the availability of sulfur sources. In Bacillus subtilis (strain 168), this protein is HTH-type transcriptional regulator YtlI (ytlI).